The sequence spans 415 residues: Serine hydroxymethyltransferase (415 aa).

Residues L119 and 123 to 125 (GHL) contribute to the (6S)-5,6,7,8-tetrahydrofolate site. K228 bears the N6-(pyridoxal phosphate)lysine mark.

It belongs to the SHMT family. Homodimer. Pyridoxal 5'-phosphate is required as a cofactor.

The protein localises to the cytoplasm. It carries out the reaction (6R)-5,10-methylene-5,6,7,8-tetrahydrofolate + glycine + H2O = (6S)-5,6,7,8-tetrahydrofolate + L-serine. Its pathway is one-carbon metabolism; tetrahydrofolate interconversion. It participates in amino-acid biosynthesis; glycine biosynthesis; glycine from L-serine: step 1/1. Functionally, catalyzes the reversible interconversion of serine and glycine with tetrahydrofolate (THF) serving as the one-carbon carrier. This reaction serves as the major source of one-carbon groups required for the biosynthesis of purines, thymidylate, methionine, and other important biomolecules. Also exhibits THF-independent aldolase activity toward beta-hydroxyamino acids, producing glycine and aldehydes, via a retro-aldol mechanism. The chain is Serine hydroxymethyltransferase from Coprothermobacter proteolyticus (strain ATCC 35245 / DSM 5265 / OCM 4 / BT).